The chain runs to 621 residues: Laccase-2 (621 aa).

Residues 1 to 23 (MMKSFFSAAALLLGLVAPSAVLA) form the signal peptide. The propeptide occupies 24–48 (APSLPGVPREVTRDLLRPVEERQSS). Residues Cys49 and Cys57 are joined by a disulfide bond. 2 Plastocyanin-like domains span residues 78–201 (TRTY…IVVN) and 210–367 (IDLG…LPTN). A glycan (N-linked (GlcNAc...) asparagine) is linked at Asn133. Cu cation-binding residues include His138, His140, His183, and His185. 2 disulfide bridges follow: Cys159–Cys586 and Cys343–Cys377. Asn261, Asn276, Asn289, Asn325, and Asn334 each carry an N-linked (GlcNAc...) asparagine glycan. N-linked (GlcNAc...) asparagine glycans are attached at residues Asn401, Asn421, and Asn441. One can recognise a Plastocyanin-like 3 domain in the interval 430-566 (DKPIVDYVIA…GGLSVQYLER (137 aa)). The Cu cation site is built by His476, His479, His481, His548, Cys549, His550, and His554. A propeptide spanning residues 606 to 621 (KVKKWVGEHPDWYIKN) is cleaved from the precursor.

It belongs to the multicopper oxidase family. As to quaternary structure, monomer. Cu cation serves as cofactor. In terms of processing, proteolytically processed at both its N-terminus and its C-terminus.

The protein localises to the secreted. It catalyses the reaction 4 hydroquinone + O2 = 4 benzosemiquinone + 2 H2O. Probably involved in lignin degradation and in the detoxification of lignin-derived products in its natural habitat (herbivorous dung), which is rich in lignin of grasses and straw. Probably involved in melanin synthesis and in perithecia development. The polypeptide is Laccase-2 (LAC2) (Podospora anserina (Pleurage anserina)).